Reading from the N-terminus, the 494-residue chain is Alpha-amylase 1 (494 aa).

An N-terminal signal peptide occupies residues 1 to 18 (MFLAKSIVCLALLAVANA). Cysteines 46 and 102 form a disulfide. Residues Asn-116, Arg-165, and Asp-174 each contribute to the Ca(2+) site. Cys-153 and Cys-167 are oxidised to a cystine. Arg-202 serves as a coordination point for chloride. The Nucleophile role is filled by Asp-204. His-208 contacts Ca(2+). The active-site Proton donor is Glu-241. 2 residues coordinate chloride: Asn-304 and Arg-343. Residues 350–370 (FTDTDQGPPTTDGQNIASPSF) form a disordered region. Positions 351–363 (TDTDQGPPTTDGQ) are enriched in low complexity. Intrachain disulfides connect Cys-376-Cys-382 and Cys-448-Cys-460.

The protein belongs to the glycosyl hydrolase 13 family. In terms of assembly, monomer. Requires Ca(2+) as cofactor. The cofactor is chloride.

It catalyses the reaction Endohydrolysis of (1-&gt;4)-alpha-D-glucosidic linkages in polysaccharides containing three or more (1-&gt;4)-alpha-linked D-glucose units.. The sequence is that of Alpha-amylase 1 (Amy35) from Drosophila ananassae (Fruit fly).